Here is a 189-residue protein sequence, read N- to C-terminus: Large ribosomal subunit protein bL9 (189 aa).

This sequence belongs to the bacterial ribosomal protein bL9 family.

In terms of biological role, binds to the 23S rRNA. This is Large ribosomal subunit protein bL9 from Cereibacter sphaeroides (strain KD131 / KCTC 12085) (Rhodobacter sphaeroides).